Here is a 501-residue protein sequence, read N- to C-terminus: uncharacterized protein (501 aa).

The active-site Proton donor is the Glu-236. Glu-333 serves as the catalytic Nucleophile.

The protein belongs to the glycosyl hydrolase 5 (cellulase A) family.

It localises to the mitochondrion intermembrane space. This is an uncharacterized protein from Saccharomyces cerevisiae (strain ATCC 204508 / S288c) (Baker's yeast).